A 341-amino-acid chain; its full sequence is S-adenosylmethionine:tRNA ribosyltransferase-isomerase (341 aa).

This sequence belongs to the QueA family. As to quaternary structure, monomer.

Its subcellular location is the cytoplasm. The enzyme catalyses 7-aminomethyl-7-carbaguanosine(34) in tRNA + S-adenosyl-L-methionine = epoxyqueuosine(34) in tRNA + adenine + L-methionine + 2 H(+). It functions in the pathway tRNA modification; tRNA-queuosine biosynthesis. In terms of biological role, transfers and isomerizes the ribose moiety from AdoMet to the 7-aminomethyl group of 7-deazaguanine (preQ1-tRNA) to give epoxyqueuosine (oQ-tRNA). This Clostridium botulinum (strain Okra / Type B1) protein is S-adenosylmethionine:tRNA ribosyltransferase-isomerase.